The following is a 45-amino-acid chain: Large ribosomal subunit protein bL34 (45 aa).

It belongs to the bacterial ribosomal protein bL34 family.

The protein is Large ribosomal subunit protein bL34 of Kineococcus radiotolerans (strain ATCC BAA-149 / DSM 14245 / SRS30216).